Reading from the N-terminus, the 234-residue chain is Opacity protein opA56 (234 aa).

A1 is a signal peptide.

This sequence belongs to the opacity porin family.

Its subcellular location is the cell outer membrane. Its function is as follows. Implicated in a number of adherence functions. OPA proteins are implicated in pathogenesis and are subject to phase variation. In Neisseria gonorrhoeae, this protein is Opacity protein opA56 (opaF).